The primary structure comprises 164 residues: Transcription elongation factor GreA (164 aa).

Residues 11-76 adopt a coiled-coil conformation; it reads EESYDRLKAE…LQELLNNAKV (66 aa).

This sequence belongs to the GreA/GreB family.

Its function is as follows. Necessary for efficient RNA polymerase transcription elongation past template-encoded arresting sites. The arresting sites in DNA have the property of trapping a certain fraction of elongating RNA polymerases that pass through, resulting in locked ternary complexes. Cleavage of the nascent transcript by cleavage factors such as GreA or GreB allows the resumption of elongation from the new 3'terminus. GreA releases sequences of 2 to 3 nucleotides. The sequence is that of Transcription elongation factor GreA from Mycolicibacterium vanbaalenii (strain DSM 7251 / JCM 13017 / BCRC 16820 / KCTC 9966 / NRRL B-24157 / PYR-1) (Mycobacterium vanbaalenii).